Here is a 511-residue protein sequence, read N- to C-terminus: Probable eukaryotic translation initiation factor 4H (511 aa).

Disordered regions lie at residues 25-63 (SWAD…DRGS) and 154-511 (TIRV…EVKI). The span at 39-51 (AREESGSGLKRGD) shows a compositional bias: basic and acidic residues. The region spanning 86–162 (FTAFIGNLSF…RTIRVNVAEA (77 aa)) is the RRM domain. Residues 179–196 (WRRSTPLASRESSSQPSR) show a composition bias toward polar residues. Basic and acidic residues-rich tracts occupy residues 230 to 247 (VRRD…RDPG) and 261 to 270 (LAEKVDRDVP). A compositionally biased stretch (polar residues) spans 285–318 (LADTEQTWSRGTKLRTPTTTSRQSSADSTPSSGA). A compositionally biased stretch (low complexity) spans 331 to 349 (TAGSPSATANATPAAPASG). Ser-334 bears the Phosphoserine mark. Basic and acidic residues-rich tracts occupy residues 360-388 (AARE…EKQK) and 394-419 (KPVE…DKVA). Over residues 420-434 (GKPTTAPATTTNTGA) the composition is skewed to low complexity. The span at 438–448 (GSADRAKKDEQ) shows a compositional bias: basic and acidic residues. Over residues 451–467 (EQVQPSRKSSQTGATSE) the composition is skewed to polar residues. A compositionally biased stretch (basic and acidic residues) spans 502–511 (VTKGVEEVKI).

The protein localises to the cytoplasm. Its subcellular location is the P-body. In terms of biological role, probable translation initiation factor. This is Probable eukaryotic translation initiation factor 4H from Cryptococcus neoformans var. grubii serotype A (strain H99 / ATCC 208821 / CBS 10515 / FGSC 9487) (Filobasidiella neoformans var. grubii).